We begin with the raw amino-acid sequence, 121 residues long: Large ribosomal subunit protein bL20 (121 aa).

Belongs to the bacterial ribosomal protein bL20 family.

Binds directly to 23S ribosomal RNA and is necessary for the in vitro assembly process of the 50S ribosomal subunit. It is not involved in the protein synthesizing functions of that subunit. In Roseobacter denitrificans (strain ATCC 33942 / OCh 114) (Erythrobacter sp. (strain OCh 114)), this protein is Large ribosomal subunit protein bL20.